A 289-amino-acid polypeptide reads, in one-letter code: Palmitoyl-protein thioesterase 3 (289 aa).

A signal peptide spans 1–20; it reads MRILSSLILLIALAIALVSA. S97 is an active-site residue. N-linked (GlcNAc...) asparagine glycans are attached at residues N189 and N195. Active-site residues include D210 and H266. N281 carries N-linked (GlcNAc...) asparagine glycosylation.

This sequence belongs to the palmitoyl-protein thioesterase family.

The protein resides in the lysosome. The catalysed reaction is S-hexadecanoyl-L-cysteinyl-[protein] + H2O = L-cysteinyl-[protein] + hexadecanoate + H(+). Removes thioester-linked fatty acyl groups such as palmitate from modified cysteine residues in proteins or peptides during lysosomal degradation. This is Palmitoyl-protein thioesterase 3 (ppt3) from Dictyostelium discoideum (Social amoeba).